A 772-amino-acid chain; its full sequence is Mitochondrial intermediate peptidase (772 aa).

A mitochondrion-targeting transit peptide spans 1–37; that stretch reads MLRTIILKAGSNASIPSPSRQNKLLRFFATAGAVSRT. His-558 contributes to the Zn(2+) binding site. The active site involves Glu-559. The Zn(2+) site is built by His-562 and Glu-587.

Belongs to the peptidase M3 family. The cofactor is Zn(2+).

It localises to the mitochondrion matrix. The catalysed reaction is Release of an N-terminal octapeptide as second stage of processing of some proteins imported into the mitochondrion.. Its activity is regulated as follows. Stimulated by Fe(2+). Functionally, cleaves proteins, imported into the mitochondrion, to their mature size. While most mitochondrial precursor proteins are processed to the mature form in one step by mitochondrial processing peptidase (MPP), the sequential cleavage by MIP of an octapeptide after initial processing by MPP is a required step for a subgroup of nuclear-encoded precursor proteins destined for the matrix or the inner membrane. Cleaves precursor proteins of respiratory components, including subunits of the electron transport chain and tricarboxylic acid cycle enzymes, and components of the mitochondrial genetic machinery, including ribosomal proteins, translation factors, and proteins required for mitochondrial DNA metabolism. The polypeptide is Mitochondrial intermediate peptidase (OCT1) (Saccharomyces cerevisiae (strain ATCC 204508 / S288c) (Baker's yeast)).